The chain runs to 468 residues: Acyltransferase R4 (468 aa).

Transmembrane regions (helical) follow at residues 21 to 41, 70 to 90, 133 to 153, 252 to 272, 308 to 328, 388 to 408, and 423 to 443; these read GILS…LGYD, LFTI…CLFF, LNLL…TGFF, FLAA…PLFW, DPFG…YPTW, FAVY…LFSW, and IGFG…AAMF.

The protein belongs to the acyltransferase 3 family.

Its subcellular location is the membrane. It functions in the pathway secondary metabolite biosynthesis. In terms of biological role, acyltransferase; part of the gene cluster that mediates the biosynthesis of squalestatin S1 (SQS1, also known as zaragozic acid A), a heavily oxidized fungal polyketide that offers potent cholesterol lowering activity by targeting squalene synthase (SS). SQS1 is composed of a 2,8-dioxobicyclic[3.2.1]octane-3,4,5-tricarboxyclic acid core that is connected to two lipophilic polyketide arms. These initial steps feature the priming of an unusual benzoic acid starter unit onto the highly reducing polyketide synthase pks2, followed by oxaloacetate extension and product release to generate a tricarboxylic acid containing product. The phenylalanine ammonia lyase (PAL) M7 and the acyl-CoA ligase M9 are involved in transforming phenylalanine into benzoyl-CoA. The citrate synthase-like protein R3 is involved in connecting the C-alpha-carbons of the hexaketide chain and oxaloacetate to afford the tricarboxylic acid unit. The potential hydrolytic enzymes, M8 and M10, are in close proximity to pks2 and may participate in product release. On the other side, the tetraketide arm is synthesized by a the squalestatin tetraketide synthase pks1 and enzymatically esterified to the core in the last biosynthetic step, by the acetyltransferase M4. The biosynthesis of the tetraketide must involve 3 rounds of chain extension. After the first and second rounds methyl-transfer occurs, and in all rounds of extension the ketoreductase and dehydratase are active. The enoyl reductase and C-MeT of pks1 are not active in the final round of extension. The acetyltransferase M4 appears to have a broad substrate selectivity for its acyl CoA substrate, allowing the in vitro synthesis of novel squalestatins. The biosynthesis of SQS1 requires several oxidative steps likely performed by oxidoreductases M1, R1 and R2. Finally, in support of the identification of the cluster as being responsible for SQS1 production, the cluster contains a gene encoding a putative squalene synthase (SS) R6, suggesting a likely mechanism for self-resistance. This Phoma sp. (strain ATCC 20986 / MF5453) protein is Acyltransferase R4.